Reading from the N-terminus, the 787-residue chain is RNA-directed RNA polymerase 2a (787 aa).

Residues lysine 505–valine 619 enclose the RdRp catalytic domain.

It belongs to the ssRNA positive-strand viruses RNA-directed RNA polymerase family. In terms of assembly, interacts with replication protein 1a.

It carries out the reaction RNA(n) + a ribonucleoside 5'-triphosphate = RNA(n+1) + diphosphate. Functionally, RNA-dependent RNA polymerase which replicates the viral genome composed of 3 RNA segments, RNA1, RNA2 and RNA3. The chain is RNA-directed RNA polymerase 2a from Olive latent virus 2 (isolate Italy) (OLV-2).